Here is a 252-residue protein sequence, read N- to C-terminus: Trans-aconitate 2-methyltransferase (252 aa).

Belongs to the methyltransferase superfamily. Tam family.

The protein localises to the cytoplasm. It catalyses the reaction trans-aconitate + S-adenosyl-L-methionine = (E)-3-(methoxycarbonyl)pent-2-enedioate + S-adenosyl-L-homocysteine. In terms of biological role, catalyzes the S-adenosylmethionine monomethyl esterification of trans-aconitate. In Escherichia coli (strain UTI89 / UPEC), this protein is Trans-aconitate 2-methyltransferase.